Here is a 145-residue protein sequence, read N- to C-terminus: MKVLIQRVSHASVVVEGQTIGAIDKGLLLFVGIEKTDSTETLERMANKVLAYRVFSDDEGKMNLNVQQIGGGVLSISQFTLAADTQKGLRPSFSCAAPPAEAQALYDKFVNLLKAKHSPIATGEFAADMKVSLLNDGPVTFMLTM.

The Gly-cisPro motif, important for rejection of L-amino acids signature appears at 137–138 (GP).

The protein belongs to the DTD family. Homodimer.

It localises to the cytoplasm. It catalyses the reaction glycyl-tRNA(Ala) + H2O = tRNA(Ala) + glycine + H(+). The enzyme catalyses a D-aminoacyl-tRNA + H2O = a tRNA + a D-alpha-amino acid + H(+). Its function is as follows. An aminoacyl-tRNA editing enzyme that deacylates mischarged D-aminoacyl-tRNAs. Also deacylates mischarged glycyl-tRNA(Ala), protecting cells against glycine mischarging by AlaRS. Acts via tRNA-based rather than protein-based catalysis; rejects L-amino acids rather than detecting D-amino acids in the active site. By recycling D-aminoacyl-tRNA to D-amino acids and free tRNA molecules, this enzyme counteracts the toxicity associated with the formation of D-aminoacyl-tRNA entities in vivo and helps enforce protein L-homochirality. This Saccharophagus degradans (strain 2-40 / ATCC 43961 / DSM 17024) protein is D-aminoacyl-tRNA deacylase.